We begin with the raw amino-acid sequence, 156 residues long: Ribosome maturation factor RimP (156 aa).

It belongs to the RimP family.

The protein localises to the cytoplasm. In terms of biological role, required for maturation of 30S ribosomal subunits. This is Ribosome maturation factor RimP from Bacillus mycoides (strain KBAB4) (Bacillus weihenstephanensis).